Reading from the N-terminus, the 853-residue chain is MESLSLTWITAIAVVLYLVQRYVRSYWRLKDIPGPVLAKLTDLQRVWWVKTGRAHEFHRDMHAMYGPIVRFGPNMVSVSDPRVIPTIYPSRPGFPKGDFYRTQKPYTRNKGAMPAVFNTQDEDLHKQLRSPIASLYSMTNVVRLEPLVDETLTVLSKQLDERFVGTNDKPFDLGDWLQYFAFDSMGTLTFSRRYGFLEQGRDMHGILQEIWNFMTRVAVMGQIPWFDEIWNKNSFITLFKRPTGFGVLKVVDNFISQRVSSRENDEKADEKDMLSQFLNIQASNPHSIMPWAPRAWTFSNVMAGSDSTANVMRTMMYNLLVDRDTLKSLRAELLEAESSNGLSRSLPSWDGVRSLPYLDACVLEALRLHPPFCLPFERVVPEGGITVCETYLPAGTVVGISPYLANRDKQTFGDDADKWRPSRWLDLSREDRVKLENSILTFGAGRRTCLGKNIAILEIKKLFPMLLLNYEIEIVNPENYQTTNAWFFRQWGLHAVIRKLPAPERDDTIEQKASIPPALNIPPSSSTVDVRIIDSGTLLDLRPDLFWTPDLPGLLKVTAPTYCFLISNGSRHVLFDLAVRQDWENLPPSIVAMIKSQTVIQEPRNISDVLDSDESSLGIRSKDIEAIIWSHAHFDHIGDPSTFPPSTELVVGPGIRDTHWPGFPTNPDAINLNTDIQGRNVREISFEKTQKGATKIGSFDAMDYFGDGSFYLLDAAGHSVGHIGALARVTTSPDSFVFMGGDSCHHAGVLRPTKYLPCPLDSGDTSLPCKSDSVFTLSPALPTDYTAALRTVENIKELDACEDVFVVLAHDATLKGKVDFYPSKINDWKAKEYGKKTKWLFYKDIENAIEGQK.

At 1 to 6 the chain is on the lumenal side; that stretch reads MESLSL. The chain crosses the membrane as a helical span at residues 7 to 29; it reads TWITAIAVVLYLVQRYVRSYWRL. At 30–853 the chain is on the cytoplasmic side; it reads KDIPGPVLAK…DIENAIEGQK (824 aa). Cys449 lines the heme pocket.

The protein belongs to the cytochrome P450 family. It depends on heme as a cofactor.

Its subcellular location is the endoplasmic reticulum membrane. It catalyses the reaction 5-methylorsellinate + reduced [NADPH--hemoprotein reductase] + O2 = 4,6-dihydroxy-2-(hydroxymethyl)-3-methylbenzoate + oxidized [NADPH--hemoprotein reductase] + H2O + H(+). The enzyme catalyses 4,6-dihydroxy-2-(hydroxymethyl)-3-methylbenzoate + H(+) = 5,7-dihydroxy-4-methylphthalide + H2O. The protein operates within secondary metabolite biosynthesis; terpenoid biosynthesis. Cytochrome P450 monooxygenase; part of the gene cluster that mediates the biosynthesis of mycophenolic acid (MPA), the first isolated antibiotic natural product in the world obtained from a culture of Penicillium brevicompactum in 1893. MpaDE' is an endoplasmic reticulum-bound enzyme that catalyzes the conversion of 5-methylorsellinic acid (5MOA) into the phthalide compound 5,7-dihydroxy-4,6-dimethylphthalide (DHMP). MpaDE' first catalyzes hydroxylation of 5-MOA to 4,6-dihydroxy-2-(hydroxymethyl)-3-methylbenzoic acid (DHMB), and then acts as a lactone synthase that catalyzes the ring closure to convert DHMB into DHMP. The first step of the pathway is the synthesis of 5-methylorsellinic acid (5MOA) by the cytosolic polyketide synthase mpaC. 5MOA is then converted to the phthalide compound 5,7-dihydroxy-4,6-dimethylphthalide (DHMP) by the endoplasmic reticulum-bound cytochrome P450 monooxygenase mpaDE. MpaDE first catalyzes hydroxylation of 5-MOA to 4,6-dihydroxy-2-(hydroxymethyl)-3-methylbenzoic acid (DHMB). MpaDE then acts as a lactone synthase that catalyzes the ring closure to convert DHMB into DHMP. The next step is the prenylation of DHMP by the Golgi apparatus-associated prenyltransferase mpaA to yield farnesyl-DHMP (FDHMP). The ER-bound oxygenase mpaB then mediates the oxidative cleavage the C19-C20 double bond in FDHMP to yield FDHMP-3C via a mycophenolic aldehyde intermediate. The O-methyltransferase mpaG catalyzes the methylation of FDHMP-3C to yield MFDHMP-3C. After the cytosolic methylation of FDHMP-3C, MFDHMP-3C enters into peroxisomes probably via free diffusion due to its low molecular weight. Upon a peroxisomal CoA ligation reaction, catalyzed by a beta-oxidation component enzyme acyl-CoA ligase ACL891, MFDHMP-3C-CoA would then be restricted to peroxisomes for the following beta-oxidation pathway steps. The peroxisomal beta-oxidation machinery than converts MFDHMP-3C-CoA into MPA_CoA, via a beta-oxidation chain-shortening process. Finally mpaH acts as a peroxisomal acyl-CoA hydrolase with high substrate specificity toward MPA-CoA to release the final product MPA. This chain is Cytochrome P450 monooxygenase mpaDE', found in Penicillium brevicompactum.